The chain runs to 360 residues: MSQSAVSFQISPVSKTQDPLIQQKIDLKTKPPGALGQLESLALQIARVQATDSQQTDQPQNTVLKIVQPTMLVFAGDHGIAAEGVSIAPSEVTRQMVQNFAHGGAAINVFCRQVGFTLEVIDCGILTPVEGVEGIIDQRLGAGTGAIHLEPAMALETVDKGFAMARDLIERHHQAGCNLVAFGEMGIGNTSAAAAIMAAIMQLDVIDCVGRGTGINSETLERKLMLIELALLLHQSALTGPKSVLACLGGFEIVQMTGAMLAAAERKMLVVVDGFIATAAALVAVQIAPNVRDYLIFAHQSDEQGHKRMLEFLQAKPLLSLGLRLGEGTGAALALPLIQASVNFYNQMASFSDAGIEAVV.

The active-site Proton acceptor is the Glu-327.

It belongs to the CobT family.

The enzyme catalyses 5,6-dimethylbenzimidazole + nicotinate beta-D-ribonucleotide = alpha-ribazole 5'-phosphate + nicotinate + H(+). It participates in nucleoside biosynthesis; alpha-ribazole biosynthesis; alpha-ribazole from 5,6-dimethylbenzimidazole: step 1/2. Its function is as follows. Catalyzes the synthesis of alpha-ribazole-5'-phosphate from nicotinate mononucleotide (NAMN) and 5,6-dimethylbenzimidazole (DMB). This is Nicotinate-nucleotide--dimethylbenzimidazole phosphoribosyltransferase from Shewanella baltica (strain OS155 / ATCC BAA-1091).